The chain runs to 60 residues: UPF0434 protein NMC0623 (60 aa).

The protein belongs to the UPF0434 family.

The protein is UPF0434 protein NMC0623 of Neisseria meningitidis serogroup C / serotype 2a (strain ATCC 700532 / DSM 15464 / FAM18).